A 385-amino-acid chain; its full sequence is Actin-2 (385 aa).

It belongs to the actin family. ARP1 subfamily.

It is found in the cytoplasm. Its subcellular location is the cytoskeleton. The chain is Actin-2 from Pneumocystis carinii.